The following is a 226-amino-acid chain: Ribonuclease 3 (226 aa).

Residues 6-128 enclose the RNase III domain; it reads MKKLQKFIGY…IIASIFLDSN (123 aa). Position 41 (glutamate 41) interacts with Mg(2+). Aspartate 45 is an active-site residue. Residues asparagine 114 and glutamate 117 each contribute to the Mg(2+) site. Glutamate 117 is an active-site residue. In terms of domain architecture, DRBM spans 155–225; it reads DPKTRLQEYL…AQNALIRLEV (71 aa).

It belongs to the ribonuclease III family. As to quaternary structure, homodimer. The cofactor is Mg(2+).

It is found in the cytoplasm. The enzyme catalyses Endonucleolytic cleavage to 5'-phosphomonoester.. Its function is as follows. Digests double-stranded RNA. Involved in the processing of primary rRNA transcript to yield the immediate precursors to the large and small rRNAs (23S and 16S). Processes some mRNAs, and tRNAs when they are encoded in the rRNA operon. Processes pre-crRNA and tracrRNA of type II CRISPR loci if present in the organism. The polypeptide is Ribonuclease 3 (Buchnera aphidicola subsp. Cinara cedri (strain Cc)).